A 388-amino-acid chain; its full sequence is Succinate--CoA ligase [ADP-forming] subunit beta (388 aa).

Residues 9–244 form the ATP-grasp domain; the sequence is KEIFRSMGVA…LEEEDPKEIE (236 aa). ATP contacts are provided by residues Lys46, 53–55, Glu99, Cys102, and Glu107; that span reads GRG. Mg(2+)-binding residues include Asn199 and Asp213. Substrate-binding positions include Asn264 and 321-323; that span reads GIM.

It belongs to the succinate/malate CoA ligase beta subunit family. As to quaternary structure, heterotetramer of two alpha and two beta subunits. Mg(2+) is required as a cofactor.

It catalyses the reaction succinate + ATP + CoA = succinyl-CoA + ADP + phosphate. It carries out the reaction GTP + succinate + CoA = succinyl-CoA + GDP + phosphate. The protein operates within carbohydrate metabolism; tricarboxylic acid cycle; succinate from succinyl-CoA (ligase route): step 1/1. Succinyl-CoA synthetase functions in the citric acid cycle (TCA), coupling the hydrolysis of succinyl-CoA to the synthesis of either ATP or GTP and thus represents the only step of substrate-level phosphorylation in the TCA. The beta subunit provides nucleotide specificity of the enzyme and binds the substrate succinate, while the binding sites for coenzyme A and phosphate are found in the alpha subunit. The chain is Succinate--CoA ligase [ADP-forming] subunit beta from Staphylococcus aureus (strain bovine RF122 / ET3-1).